Here is a 201-residue protein sequence, read N- to C-terminus: Holliday junction branch migration complex subunit RuvA (201 aa).

The domain I stretch occupies residues 1 to 64; sequence MFAFLRGELV…EDAQQLFGFL (64 aa). A domain II region spans residues 65-143; sequence DEEELQLFRL…KIQPAASGKT (79 aa). Positions 144–154 are flexible linker; the sequence is AGAPQALQLNE. The segment at 154-201 is domain III; that stretch reads EDALAALMTLGFPKPAAQKAISGILETSPGLSVEEVVRAALIAIHNNF.

Belongs to the RuvA family. Homotetramer. Forms an RuvA(8)-RuvB(12)-Holliday junction (HJ) complex. HJ DNA is sandwiched between 2 RuvA tetramers; dsDNA enters through RuvA and exits via RuvB. An RuvB hexamer assembles on each DNA strand where it exits the tetramer. Each RuvB hexamer is contacted by two RuvA subunits (via domain III) on 2 adjacent RuvB subunits; this complex drives branch migration. In the full resolvosome a probable DNA-RuvA(4)-RuvB(12)-RuvC(2) complex forms which resolves the HJ.

It is found in the cytoplasm. The RuvA-RuvB-RuvC complex processes Holliday junction (HJ) DNA during genetic recombination and DNA repair, while the RuvA-RuvB complex plays an important role in the rescue of blocked DNA replication forks via replication fork reversal (RFR). RuvA specifically binds to HJ cruciform DNA, conferring on it an open structure. The RuvB hexamer acts as an ATP-dependent pump, pulling dsDNA into and through the RuvAB complex. HJ branch migration allows RuvC to scan DNA until it finds its consensus sequence, where it cleaves and resolves the cruciform DNA. In Chlorobaculum tepidum (strain ATCC 49652 / DSM 12025 / NBRC 103806 / TLS) (Chlorobium tepidum), this protein is Holliday junction branch migration complex subunit RuvA.